Reading from the N-terminus, the 80-residue chain is RNA-binding protein Hfq (80 aa).

The Sm domain maps to 10–69 (DPFLNVLRKEHIPVSIYLVNGIKLQGHIDSFDQYVVLLRNSVTQMVYKHAISTIVPGKAV).

The protein belongs to the Hfq family. Homohexamer.

RNA chaperone that binds small regulatory RNA (sRNAs) and mRNAs to facilitate mRNA translational regulation in response to envelope stress, environmental stress and changes in metabolite concentrations. Also binds with high specificity to tRNAs. The polypeptide is RNA-binding protein Hfq (Nitrosomonas eutropha (strain DSM 101675 / C91 / Nm57)).